We begin with the raw amino-acid sequence, 306 residues long: D-alanine--D-alanine ligase (306 aa).

Residues 101–301 enclose the ATP-grasp domain; the sequence is KKILAHAGLP…FPDLVEHLVR (201 aa). 129–185 lines the ATP pocket; sequence VAELGLPVVVKAPTQGSSIGVYIVEREEDLEARITDAVAYGGTRVLVEKFIAGPELT. Mg(2+) contacts are provided by Asp-256, Glu-268, and Asn-270.

This sequence belongs to the D-alanine--D-alanine ligase family. Mg(2+) is required as a cofactor. The cofactor is Mn(2+).

Its subcellular location is the cytoplasm. The catalysed reaction is 2 D-alanine + ATP = D-alanyl-D-alanine + ADP + phosphate + H(+). Its pathway is cell wall biogenesis; peptidoglycan biosynthesis. In terms of biological role, cell wall formation. The sequence is that of D-alanine--D-alanine ligase from Desulforudis audaxviator (strain MP104C).